The following is a 459-amino-acid chain: Putative metabolite transport protein YdjK (459 aa).

Residues 1-25 (MEQITKPHCGARLDRLPDCRWHSSM) lie on the Cytoplasmic side of the membrane. A helical transmembrane segment spans residues 26–46 (FAIVAFGLLVCWSNAVGGLIL). At 47–60 (AQLKALGWTDNSTT) the chain is on the periplasmic side. A helical transmembrane segment spans residues 61–81 (ATFSAITTAGMFLGALVGGII). The Cytoplasmic segment spans residues 82–90 (GDKTGRRNA). The helical transmembrane segment at 91-111 (FILYEAIHIASMVVGAFSPNM) threads the bilayer. Position 112 (Asp112) is a topological domain, periplasmic. A helical membrane pass occupies residues 113-133 (FLIACRFVMGVGLGALLVTLF). Residues 134 to 153 (AGFTEYMPGRNRGTWSSRVS) are Cytoplasmic-facing. Residues 154-174 (FIGNWSYPLCSLIAMGLTPLI) form a helical membrane-spanning segment. The Periplasmic segment spans residues 175-181 (SAEWNWR). Residues 182–202 (VQLLIPAILSLIATALAWRYF) traverse the membrane as a helical segment. At 203–271 (PESPRWLESR…LLKRVILGSC (69 aa)) the chain is on the cytoplasmic side. The helical transmembrane segment at 272–292 (VLIAMNVVQYTLINWLPTIFM) threads the bilayer. Residues 293–301 (TQGINLKDS) lie on the Periplasmic side of the membrane. The chain crosses the membrane as a helical span at residues 302–322 (IVLNTMSMFGAPFGIFIAMLV). At 323-329 (MDKIPRK) the chain is on the cytoplasmic side. A helical transmembrane segment spans residues 330-350 (TMGVGLLILIAVLGYIYSLQT). A topological domain (periplasmic) is located at residue Ser351. The chain crosses the membrane as a helical span at residues 352–372 (MLLITLIGFFLITFVYMYVCY). Over 373–399 (ASAVYVPEIWPTEAKLRGSGLANAVGR) the chain is Cytoplasmic. 2 consecutive transmembrane segments (helical) span residues 400–420 (ISGI…GVTG) and 421–441 (VFIL…TIGI). The Cytoplasmic segment spans residues 442-459 (ETKGVSVESLSIDAVANK).

This sequence belongs to the major facilitator superfamily. Sugar transporter (TC 2.A.1.1) family.

The protein resides in the cell inner membrane. The sequence is that of Putative metabolite transport protein YdjK (ydjK) from Escherichia coli (strain K12).